Reading from the N-terminus, the 98-residue chain is ATP synthase subunit c (98 aa).

2 consecutive transmembrane segments (helical) span residues 27–47 and 73–93; these read ALAL…GLGL and IIGA…FFVV.

This sequence belongs to the ATPase C chain family. In terms of assembly, F-type ATPases have 2 components, F(1) - the catalytic core - and F(0) - the membrane proton channel. F(1) has five subunits: alpha(3), beta(3), gamma(1), delta(1), epsilon(1). F(0) has three main subunits: a(1), b(2) and c(10-14). The alpha and beta chains form an alternating ring which encloses part of the gamma chain. F(1) is attached to F(0) by a central stalk formed by the gamma and epsilon chains, while a peripheral stalk is formed by the delta and b chains.

The protein resides in the cell inner membrane. F(1)F(0) ATP synthase produces ATP from ADP in the presence of a proton or sodium gradient. F-type ATPases consist of two structural domains, F(1) containing the extramembraneous catalytic core and F(0) containing the membrane proton channel, linked together by a central stalk and a peripheral stalk. During catalysis, ATP synthesis in the catalytic domain of F(1) is coupled via a rotary mechanism of the central stalk subunits to proton translocation. Its function is as follows. Key component of the F(0) channel; it plays a direct role in translocation across the membrane. A homomeric c-ring of between 10-14 subunits forms the central stalk rotor element with the F(1) delta and epsilon subunits. This is ATP synthase subunit c from Protochlamydia amoebophila (strain UWE25).